The following is a 166-amino-acid chain: Probable RNA-binding protein EIF1AD (166 aa).

Positions 5-89 (TKRKHVVKEV…VKAEISFVLC (85 aa)) constitute an S1-like domain. The short motif at 6–12 (KRKHVVK) is the Nuclear localization signal element. Thr33 is subject to Phosphothreonine. A Nuclear localization signal motif is present at residues 56–65 (KYRKNIWIKR). A disordered region spans residues 99–166 (DGHWPEAFSQ…EEESEEEEAA (68 aa)). The segment covering 110–119 (TEKDNNDRNR) has biased composition (basic and acidic residues). Phosphoserine is present on residues Ser132, Ser136, Ser137, Ser138, Ser156, and Ser160. Residues 156 to 166 (SEEESEEEEAA) show a composition bias toward acidic residues.

Belongs to the EIF1AD family. In terms of assembly, interacts with GAPDH and STAT1.

It localises to the nucleus. Functionally, plays a role into cellular response to oxidative stress. Decreases cell proliferation. The sequence is that of Probable RNA-binding protein EIF1AD (EIF1AD) from Bos taurus (Bovine).